We begin with the raw amino-acid sequence, 336 residues long: Mitochondrial import receptor subunit TOM40 homolog (336 aa).

The disordered stretch occupies residues 1–58 (MGNVLAASSPAPPAAGSPPAPGLVSVPPGFTMPPVAGLTPTPDKKETQEDRLPNPGTF). Over residues 10-21 (PAPPAAGSPPAP) the composition is skewed to pro residues. Over residues 42-52 (PDKKETQEDRL) the composition is skewed to basic and acidic residues.

It belongs to the Tom40 family. In terms of assembly, forms part of the preprotein translocase complex of the outer mitochondrial membrane (TOM complex). Interacts with mitochondrial targeting sequences.

Its subcellular location is the mitochondrion outer membrane. Channel-forming protein essential for import of protein precursors into mitochondria. The protein is Mitochondrial import receptor subunit TOM40 homolog (tomm40) of Xenopus tropicalis (Western clawed frog).